Reading from the N-terminus, the 314-residue chain is Deoxymugineic acid synthase 1 (314 aa).

NADP(+) is bound at residue D44. Y49 serves as the catalytic Proton donor. H112 contacts substrate. NADP(+)-binding positions include 158–159 (CN), Q180, 258–266 (FDEGRMKEN), and 273–281 (ELSEEERQR).

This sequence belongs to the aldo/keto reductase family.

The enzyme catalyses 2'-deoxymugineate + NAD(+) = 3''-deamino-3''-oxonicotianamine + NADH + H(+). It catalyses the reaction 2'-deoxymugineate + NADP(+) = 3''-deamino-3''-oxonicotianamine + NADPH + H(+). The protein operates within siderophore biosynthesis. In terms of biological role, catalyzes the reduction of a 3''-keto intermediate during the biosynthesis of 2'-deoxymugineic acid (DMA) from L-Met. Involved in the formation of phytosiderophores (MAs) belonging to the mugineic acid family and required to acquire iron. The sequence is that of Deoxymugineic acid synthase 1 from Zea mays (Maize).